Here is a 127-residue protein sequence, read N- to C-terminus: Small ribosomal subunit protein uS12 (127 aa).

The residue at position 89 (Asp-89) is a 3-methylthioaspartic acid.

This sequence belongs to the universal ribosomal protein uS12 family. Part of the 30S ribosomal subunit. Contacts proteins S8 and S17. May interact with IF1 in the 30S initiation complex.

In terms of biological role, with S4 and S5 plays an important role in translational accuracy. Functionally, interacts with and stabilizes bases of the 16S rRNA that are involved in tRNA selection in the A site and with the mRNA backbone. Located at the interface of the 30S and 50S subunits, it traverses the body of the 30S subunit contacting proteins on the other side and probably holding the rRNA structure together. The combined cluster of proteins S8, S12 and S17 appears to hold together the shoulder and platform of the 30S subunit. This chain is Small ribosomal subunit protein uS12, found in Campylobacter lari (strain RM2100 / D67 / ATCC BAA-1060).